Reading from the N-terminus, the 22-residue chain is Short-chain-enoyl-CoA hydratase (22 aa).

It belongs to the enoyl-CoA hydratase/isomerase family.

The enzyme catalyses a short-chain (3S)-3-hydroxyacyl-CoA = a short-chain (2E)-enoyl-CoA + H2O. It functions in the pathway lipid metabolism; butanoate metabolism. The protein is Short-chain-enoyl-CoA hydratase (crt) of Clostridium pasteurianum.